The primary structure comprises 234 residues: Bromodomain-containing protein DDB_G0271118 (234 aa).

The 60-residue stretch at 1–60 (MDLGTIKGELDNNGYSTIKDFTADVRLMFENALTYNADSSPIWKHAKTLLYFHRKHDEHV) folds into the Bromo domain. Over residues 134-194 (NNNSNNNNNN…SSSSSSSSSS (61 aa)) the composition is skewed to low complexity. The tract at residues 134 to 209 (NNNSNNNNNN…KKYSDEERRN (76 aa)) is disordered.

The protein is Bromodomain-containing protein DDB_G0271118 of Dictyostelium discoideum (Social amoeba).